Consider the following 174-residue polypeptide: Cytochrome c-type biogenesis protein CcmE (174 aa).

Residues 1-8 lie on the Cytoplasmic side of the membrane; it reads MNPRRKSR. Residues 9–29 form a helical; Signal-anchor for type II membrane protein membrane-spanning segment; that stretch reads LSVVLFIFLGISVASALVLYA. Residues 30-174 lie on the Periplasmic side of the membrane; sequence LRQNIDLFYT…QEKQFKEGNQ (145 aa). Heme-binding residues include H131 and Y135. The segment at 149–174 is disordered; the sequence is KPMGISDLKNESDRDRQEKQFKEGNQ. Over residues 156 to 174 the composition is skewed to basic and acidic residues; that stretch reads LKNESDRDRQEKQFKEGNQ.

The protein belongs to the CcmE/CycJ family.

The protein resides in the cell inner membrane. Its function is as follows. Heme chaperone required for the biogenesis of c-type cytochromes. Transiently binds heme delivered by CcmC and transfers the heme to apo-cytochromes in a process facilitated by CcmF and CcmH. The chain is Cytochrome c-type biogenesis protein CcmE from Histophilus somni (strain 129Pt) (Haemophilus somnus).